The sequence spans 865 residues: ABC transporter ATP-binding/permease protein Rv1747 (865 aa).

Residues 29 to 78 (VVVGRDLRADVRVAHPLISRAHLLLRFDQGRWVAIDNGSLNGLYLNNRRV) enclose the FHA 1 domain. The segment at 104-205 (GRHRGSAGRP…PAGARGGTEA (102 aa)) is disordered. Residues 135–156 (PQTGTLGSGQLQQLPPATTRIP) show a composition bias toward low complexity. Position 152 is a phosphothreonine (T152). A compositionally biased stretch (pro residues) spans 157-166 (AAPPSGPQPR). The residue at position 210 (T210) is a Phosphothreonine. The region spanning 230–279 (VRIGRANDNDIVIPEVLASRHHATLVPTPGGTEIRDNRSINGTFVNGARV) is the FHA 2 domain. Positions 319-552 (LDVRGVTWTI…VMGTTNWADI (234 aa)) constitute an ABC transporter domain. 352-359 (GPSGAGKS) contacts ATP. The ABC transmembrane type-2 domain occupies 596 to 810 (RQFSTIARRQ…TPARWGFAAS (215 aa)). Helical transmembrane passes span 614 to 634 (GYFV…MSVP), 652 to 672 (PGQI…ALTI), 700 to 720 (VCVY…IVLV), 740 to 760 (FVDV…LSAI), 767 to 787 (IMPL…GMIP), and 836 to 856 (SAWW…VGFV).

This sequence in the central section; belongs to the ABC transporter superfamily. The protein in the C-terminal section; belongs to the ABC-2 integral membrane protein family. Homodimer. Interacts with PknF. Post-translationally, phosphorylated by PknF. Can probably be phosphorylated in vivo by other kinases when PknF is missing.

The protein localises to the cell membrane. Function is positively regulated by phosphorylation. Functionally, involved in the translocation of an unknown substrate across the membrane. Transmembrane domains (TMD) form a pore in the membrane and the ATP-binding domain (NBD) is responsible for energy generation. Required for virulence. This chain is ABC transporter ATP-binding/permease protein Rv1747, found in Mycobacterium tuberculosis (strain ATCC 25618 / H37Rv).